A 304-amino-acid polypeptide reads, in one-letter code: Glutaminase (304 aa).

Substrate-binding residues include Ser63, Asn114, Glu158, Asn165, Tyr189, Tyr240, and Val258.

Belongs to the glutaminase family. As to quaternary structure, homotetramer.

It catalyses the reaction L-glutamine + H2O = L-glutamate + NH4(+). This chain is Glutaminase, found in Shewanella loihica (strain ATCC BAA-1088 / PV-4).